The following is a 149-amino-acid chain: Arginine repressor (149 aa).

It belongs to the ArgR family.

The protein localises to the cytoplasm. It functions in the pathway amino-acid biosynthesis; L-arginine biosynthesis [regulation]. Functionally, regulates arginine biosynthesis genes. In Bacillus cereus (strain ATCC 10987 / NRS 248), this protein is Arginine repressor.